Here is a 435-residue protein sequence, read N- to C-terminus: Chaperone SurA (435 aa).

The N-terminal stretch at 1–24 (MRLRSFAFLGFMLLVAMAPSMASA) is a signal peptide. PpiC domains lie at 173–274 (DTAY…KLID) and 286–385 (VTEN…ELED).

The protein localises to the periplasm. The enzyme catalyses [protein]-peptidylproline (omega=180) = [protein]-peptidylproline (omega=0). Chaperone involved in the correct folding and assembly of outer membrane proteins. Recognizes specific patterns of aromatic residues and the orientation of their side chains, which are found more frequently in integral outer membrane proteins. May act in both early periplasmic and late outer membrane-associated steps of protein maturation. This Chromohalobacter salexigens (strain ATCC BAA-138 / DSM 3043 / CIP 106854 / NCIMB 13768 / 1H11) protein is Chaperone SurA.